The primary structure comprises 468 residues: Probable multidrug resistance protein NorM (468 aa).

The next 11 helical transmembrane spans lie at 57-79 (LAAG…GVLT), 100-122 (IYWT…LSFA), 142-164 (YAAV…RSFL), 173-195 (LLWV…IHGA), 205-227 (GSAT…LLHG), 248-270 (LFGI…LATG), 280-302 (SLAA…LAIG), 323-345 (HAGF…VLIV), 360-382 (PANA…FQIV), 401-423 (VPML…WFAF), and 433-452 (WWGL…WRFH).

This sequence belongs to the multi antimicrobial extrusion (MATE) (TC 2.A.66.1) family.

It localises to the cell inner membrane. Multidrug efflux pump. This is Probable multidrug resistance protein NorM (norM) from Burkholderia mallei (strain ATCC 23344).